A 318-amino-acid chain; its full sequence is Biotin synthase (318 aa).

A Radical SAM core domain is found at 44 to 270 (LCGDAVNLCS…INPTANIRLA (227 aa)). [4Fe-4S] cluster is bound by residues cysteine 62, cysteine 66, and cysteine 69. [2Fe-2S] cluster-binding residues include serine 106, cysteine 138, cysteine 198, and arginine 268.

This sequence belongs to the radical SAM superfamily. Biotin synthase family. As to quaternary structure, homodimer. It depends on [4Fe-4S] cluster as a cofactor. Requires [2Fe-2S] cluster as cofactor.

It catalyses the reaction (4R,5S)-dethiobiotin + (sulfur carrier)-SH + 2 reduced [2Fe-2S]-[ferredoxin] + 2 S-adenosyl-L-methionine = (sulfur carrier)-H + biotin + 2 5'-deoxyadenosine + 2 L-methionine + 2 oxidized [2Fe-2S]-[ferredoxin]. Its pathway is cofactor biosynthesis; biotin biosynthesis; biotin from 7,8-diaminononanoate: step 2/2. Its function is as follows. Catalyzes the conversion of dethiobiotin (DTB) to biotin by the insertion of a sulfur atom into dethiobiotin via a radical-based mechanism. This is Biotin synthase from Alkaliphilus metalliredigens (strain QYMF).